The primary structure comprises 260 residues: Voltage-dependent calcium channel gamma-6 subunit (260 aa).

The segment at 14-33 (RRGAAGRRRAHGQGRSGLTP) is disordered. Residues 15–25 (RGAAGRRRAHG) are compositionally biased toward basic residues. 4 helical membrane passes run 43–63 (LLLA…EFWV), 143–163 (VIAV…IMVL), 169–189 (FLLR…LVSL), and 221–241 (LGCG…FLLL).

The protein belongs to the PMP-22/EMP/MP20 family. CACNG subfamily. Interacts with CACNA1C. Identified in a complex with the L-type calcium channel subunits CACNA1C, CACNA2D1 and either CACNB1 or CACNB2. Detected in heart left ventricle.

It is found in the cell membrane. Its function is as follows. Regulates the activity of L-type calcium channels that contain CACNA1C as pore-forming subunit. The protein is Voltage-dependent calcium channel gamma-6 subunit (CACNG6) of Homo sapiens (Human).